We begin with the raw amino-acid sequence, 301 residues long: GTPase Era (301 aa).

The Era-type G domain maps to 4–173 (KAGFVALIGK…LECISQHLSP (170 aa)). A G1 region spans residues 12–19 (GKPNAGKS). 12 to 19 (GKPNAGKS) is a GTP binding site. Residues 38–42 (NATRK) are G2. Positions 64-67 (DTPG) are G3. GTP is bound by residues 64–68 (DTPGL) and 122–125 (SKID). The G4 stretch occupies residues 122–125 (SKID). The segment at 152 to 154 (LSA) is G5. The KH type-2 domain occupies 204 to 280 (LSDEIPYESD…FLNLQVIAQK (77 aa)).

It belongs to the TRAFAC class TrmE-Era-EngA-EngB-Septin-like GTPase superfamily. Era GTPase family. In terms of assembly, monomer.

The protein localises to the cytoplasm. It localises to the cell inner membrane. Functionally, an essential GTPase that binds both GDP and GTP, with rapid nucleotide exchange. Plays a role in 16S rRNA processing and 30S ribosomal subunit biogenesis and possibly also in cell cycle regulation and energy metabolism. This is GTPase Era from Helicobacter pylori (strain ATCC 700392 / 26695) (Campylobacter pylori).